The chain runs to 426 residues: Anaerobic glycerol-3-phosphate dehydrogenase subunit C (426 aa).

4Fe-4S ferredoxin-type domains lie at 21 to 53 (SYKY…LYPG) and 67 to 99 (KSAE…GDLI). Positions 32, 35, 38, 42, 79, 82, 85, and 89 each coordinate [4Fe-4S] cluster.

In terms of assembly, composed of a catalytic GlpA/B dimer and of GlpC.

It is found in the cell inner membrane. It participates in polyol metabolism; glycerol degradation via glycerol kinase pathway; glycerone phosphate from sn-glycerol 3-phosphate (anaerobic route): step 1/1. Functionally, electron transfer protein; may also function as the membrane anchor for the GlpAB dimer. The polypeptide is Anaerobic glycerol-3-phosphate dehydrogenase subunit C (glpC) (Haemophilus influenzae (strain ATCC 51907 / DSM 11121 / KW20 / Rd)).